A 110-amino-acid polypeptide reads, in one-letter code: uncharacterized protein (110 aa).

Disordered regions lie at residues 1–41 (MEWG…ERAQ) and 65–110 (LRQL…ASES). Positions 38 to 68 (ERAQQLLDAVEQRQRQLLDTIAACEEMLRQL) form a coiled coil.

This is an uncharacterized protein from Mus musculus (Mouse).